The primary structure comprises 257 residues: Glutamate racemase (257 aa).

Substrate is bound by residues 12 to 13 (DS) and 44 to 45 (YG). Cys-75 serves as the catalytic Proton donor/acceptor. 76 to 77 (NT) serves as a coordination point for substrate. Catalysis depends on Cys-185, which acts as the Proton donor/acceptor. A substrate-binding site is contributed by 186-187 (TH).

The protein belongs to the aspartate/glutamate racemases family.

The catalysed reaction is L-glutamate = D-glutamate. Its pathway is cell wall biogenesis; peptidoglycan biosynthesis. In terms of biological role, provides the (R)-glutamate required for cell wall biosynthesis. The chain is Glutamate racemase from Clostridium botulinum (strain ATCC 19397 / Type A).